The following is a 168-amino-acid chain: Dihydrofolate reductase (168 aa).

In terms of domain architecture, DHFR spans 1-164 (MIIGIWAEDE…YTFTIKKYEK (164 aa)). 5–7 (IWA) lines the substrate pocket. Residues 6-7 (WA) and 14-19 (IGEADK) each bind NADP(+). Glutamate 27 contacts substrate. NADP(+) is bound at residue 43–46 (GRKT). Arginine 58 contacts substrate. NADP(+) contacts are provided by residues 63-66 (LTRD) and 99-104 (TGGAEI). Residue threonine 118 participates in substrate binding.

Belongs to the dihydrofolate reductase family.

The enzyme catalyses (6S)-5,6,7,8-tetrahydrofolate + NADP(+) = 7,8-dihydrofolate + NADPH + H(+). It functions in the pathway cofactor biosynthesis; tetrahydrofolate biosynthesis; 5,6,7,8-tetrahydrofolate from 7,8-dihydrofolate: step 1/1. Functionally, key enzyme in folate metabolism. Catalyzes an essential reaction for de novo glycine and purine synthesis, and for DNA precursor synthesis. In Lactococcus lactis subsp. lactis (strain IL1403) (Streptococcus lactis), this protein is Dihydrofolate reductase (folA).